Consider the following 791-residue polypeptide: RAS guanyl-releasing protein 1 (791 aa).

The 124-residue stretch at L49–S172 folds into the N-terminal Ras-GEF domain. The tract at residues S53–Y106 is ras exchanger motif region; required for transforming activity. Residues E201–R432 enclose the Ras-GEF domain. EF-hand domains follow at residues H466–S501 and F502–I528. Residues D479, D481, D483, Y485, E490, D506, D508, E510, and E517 each contribute to the Ca(2+) site. A Phorbol-ester/DAG-type zinc finger spans residues L537 to C587. The tract at residues T671–R715 is disordered. A compositionally biased stretch (polar residues) spans Q672–C681. A compositionally biased stretch (pro residues) spans S702 to V712. Positions I728–D783 form a coiled coil.

The protein belongs to the RASGRP family.

It localises to the cytoplasm. The protein resides in the cytosol. It is found in the cell membrane. The protein localises to the golgi apparatus membrane. Its subcellular location is the endoplasmic reticulum membrane. Its activity is regulated as follows. Regulated by F-actin polymerization and probably by calcium. Functionally, functions as a diacylglycerol (DAG)-regulated nucleotide exchange factor specifically activating Ras through the exchange of bound GDP for GTP. The chain is RAS guanyl-releasing protein 1 (rasgrp1) from Xenopus laevis (African clawed frog).